The primary structure comprises 430 residues: Zinc carboxypeptidase A 1 (430 aa).

Residues 1 to 22 form the signal peptide; sequence MSLNKCLLFALLAIVASASVSA. In terms of domain architecture, Peptidase M14 spans 124-423; that stretch reads QYYELDDTYA…DSIVAMATEV (300 aa). Zn(2+)-binding residues include histidine 187 and glutamate 190. Cysteine 252 and cysteine 275 are disulfide-bonded. Histidine 311 lines the Zn(2+) pocket. The active-site Proton donor/acceptor is glutamate 386.

Belongs to the peptidase M14 family. The cofactor is Zn(2+).

It localises to the secreted. The chain is Zinc carboxypeptidase A 1 from Drosophila melanogaster (Fruit fly).